Reading from the N-terminus, the 264-residue chain is Transmembrane protein 270 (264 aa).

The next 3 membrane-spanning stretches (helical) occupy residues 31–51 (HLYRFLLLKMAIFQHWVLGLA), 74–94 (LSLALRAGLTLLWVPMWLLLW), and 133–153 (LFLSCLHSLMLVALLLLLLTW). Positions 227–236 (AQEVKSQETS) are enriched in polar residues. The disordered stretch occupies residues 227 to 264 (AQEVKSQETSGPPPQFLIPESSTTESGPLPPQPETPGE). Residues 254–264 (PLPPQPETPGE) show a composition bias toward pro residues.

Testis.

It localises to the membrane. The chain is Transmembrane protein 270 from Mus musculus (Mouse).